We begin with the raw amino-acid sequence, 325 residues long: MQTSLLKPKIIAVESLGESHAKVVMEPFERGYGHTLGNALRRVLLSSMVGYAPTEVTIAGVVHEYSTLDGVQEDVVNLLLNLKGVVFKLHNRDEVTVTLRKEGEGVVTAGDIELAHDCEVINPDHVIAHLSKGGKLDVQIKVEKGRGYVPGNVRRYGEESAKIIGRIVLDASFSPVRRVSYAVESARVEQRTDLDKLVMNIETNGVISPEEAIRQSARILVDQLSVFAALEGTEAAAEAPSRAPQIDPILLRPVDDLELTVRSANCLKAENIYYIGDLIQRTENELLKTPNLGRKSLNEIKEVLASRGLTLGMKLENWPPAGLDK.

Residues 1–231 form an alpha N-terminal domain (alpha-NTD) region; sequence MQTSLLKPKI…DQLSVFAALE (231 aa). The alpha C-terminal domain (alpha-CTD) stretch occupies residues 246 to 325; sequence IDPILLRPVD…ENWPPAGLDK (80 aa).

This sequence belongs to the RNA polymerase alpha chain family. In terms of assembly, homodimer. The RNAP catalytic core consists of 2 alpha, 1 beta, 1 beta' and 1 omega subunit. When a sigma factor is associated with the core the holoenzyme is formed, which can initiate transcription.

The enzyme catalyses RNA(n) + a ribonucleoside 5'-triphosphate = RNA(n+1) + diphosphate. DNA-dependent RNA polymerase catalyzes the transcription of DNA into RNA using the four ribonucleoside triphosphates as substrates. The chain is DNA-directed RNA polymerase subunit alpha from Paraburkholderia phymatum (strain DSM 17167 / CIP 108236 / LMG 21445 / STM815) (Burkholderia phymatum).